A 368-amino-acid polypeptide reads, in one-letter code: Flagellar P-ring protein (368 aa).

Residues 1–24 (MDKPMKRIFVVLVILLVLPQLALA) form the signal peptide.

The protein belongs to the FlgI family. In terms of assembly, the basal body constitutes a major portion of the flagellar organelle and consists of four rings (L,P,S, and M) mounted on a central rod.

The protein resides in the periplasm. It localises to the bacterial flagellum basal body. Its function is as follows. Assembles around the rod to form the L-ring and probably protects the motor/basal body from shearing forces during rotation. The chain is Flagellar P-ring protein from Geobacter sulfurreducens (strain ATCC 51573 / DSM 12127 / PCA).